Reading from the N-terminus, the 72-residue chain is Translational regulator CsrA (72 aa).

The protein belongs to the CsrA/RsmA family. Homodimer; the beta-strands of each monomer intercalate to form a hydrophobic core, while the alpha-helices form wings that extend away from the core.

It localises to the cytoplasm. Functionally, a translational regulator that binds mRNA to regulate translation initiation and/or mRNA stability. Usually binds in the 5'-UTR at or near the Shine-Dalgarno sequence preventing ribosome-binding, thus repressing translation. Its main target seems to be the major flagellin gene, while its function is anatagonized by FliW. The sequence is that of Translational regulator CsrA from Clostridium botulinum (strain ATCC 19397 / Type A).